Here is an 85-residue protein sequence, read N- to C-terminus: MDTPSSGSDSFDFEAALKELEGLVERMERGELSLEESLRQFERGVELTRACQKALQEAEQKVETLIGQGADAHEQAFEDPAHRDT.

It belongs to the XseB family. Heterooligomer composed of large and small subunits.

The protein localises to the cytoplasm. It catalyses the reaction Exonucleolytic cleavage in either 5'- to 3'- or 3'- to 5'-direction to yield nucleoside 5'-phosphates.. In terms of biological role, bidirectionally degrades single-stranded DNA into large acid-insoluble oligonucleotides, which are then degraded further into small acid-soluble oligonucleotides. The protein is Exodeoxyribonuclease 7 small subunit of Alkalilimnicola ehrlichii (strain ATCC BAA-1101 / DSM 17681 / MLHE-1).